The chain runs to 305 residues: 17-beta-hydroxysteroid dehydrogenase type 3 (305 aa).

44-73 (GQWAVITGAGDGIGKAYSFELARHGLNVVL) is an NADP(+) binding site. Ser181 is a substrate binding site. Tyr194 functions as the Proton acceptor in the catalytic mechanism.

Belongs to the short-chain dehydrogenases/reductases (SDR) family. 17-beta-HSD 3 subfamily. In terms of tissue distribution, expressed in the testes.

The protein resides in the endoplasmic reticulum. It catalyses the reaction a 17beta-hydroxy steroid + NADP(+) = a 17-oxo steroid + NADPH + H(+). The enzyme catalyses testosterone + NADP(+) = androst-4-ene-3,17-dione + NADPH + H(+). It carries out the reaction 17beta-estradiol + NADP(+) = estrone + NADPH + H(+). The catalysed reaction is 3beta-hydroxyandrost-5-en-17-one + NADPH + H(+) = androst-5-en-3beta,17beta-diol + NADP(+). It catalyses the reaction 17beta-hydroxy-5alpha-androstan-3-one + NADP(+) = 5alpha-androstan-3,17-dione + NADPH + H(+). The enzyme catalyses androsterone + NADPH + H(+) = 5alpha-androstane-3alpha,17beta-diol + NADP(+). It carries out the reaction 3beta-hydroxy-5alpha-androstan-17-one + NADPH + H(+) = 5alpha-androstane-3beta,17beta-diol + NADP(+). The catalysed reaction is androst-4-ene-3,11,17-trione + NADPH + H(+) = 17beta-hydroxyandrost-4-ene-3,11-dione + NADP(+). It catalyses the reaction 11beta-hydroxyandrost-4-ene-3,17-dione + NADPH + H(+) = 11beta,17beta-dihydroxyandrost-4-ene-3-one + NADP(+). It participates in hormone biosynthesis; testosterone biosynthesis. Its pathway is steroid metabolism. Catalyzes the conversion of 17-oxosteroids to 17beta-hydroxysteroids. Favors the reduction of androstenedione to testosterone. Testosterone is the key androgen driving male development and function. Uses NADPH while the two other EDH17B enzymes use NADH. Androgens such as epiandrosterone, dehydroepiandrosterone, androsterone and androstanedione are accepted as substrates and reduced at C-17. Can reduce 11-ketoandrostenedione as well as 11beta-hydroxyandrostenedione at C-17 to the respective testosterone forms. Plays a role in the rate-limiting-step for the maximum level of testosterone production by the testis but does not affect basal testosterone production. This Mus musculus (Mouse) protein is 17-beta-hydroxysteroid dehydrogenase type 3.